A 370-amino-acid polypeptide reads, in one-letter code: Coproporphyrin III ferrochelatase (370 aa).

Fe-coproporphyrin III is bound by residues Ser-58 and Tyr-127. His-189 and Glu-276 together coordinate Fe(2+).

This sequence belongs to the ferrochelatase family.

The protein localises to the cytoplasm. It catalyses the reaction Fe-coproporphyrin III + 2 H(+) = coproporphyrin III + Fe(2+). It functions in the pathway porphyrin-containing compound metabolism; protoheme biosynthesis. Involved in coproporphyrin-dependent heme b biosynthesis. Catalyzes the insertion of ferrous iron into coproporphyrin III to form Fe-coproporphyrin III. The protein is Coproporphyrin III ferrochelatase of Corynebacterium glutamicum (strain R).